We begin with the raw amino-acid sequence, 185 residues long: Phospholipase A2 inhibitor 25 kDa subunit (185 aa).

Intrachain disulfides connect cysteine 3–cysteine 27, cysteine 6–cysteine 13, cysteine 20–cysteine 48, cysteine 54–cysteine 75, cysteine 76–cysteine 81, cysteine 101–cysteine 126, cysteine 119–cysteine 146, and cysteine 152–cysteine 172.

Belongs to the CNF-like-inhibitor family. As to quaternary structure, heterodimer with phospholipase A2 inhibitor 31 kDa. In terms of tissue distribution, expressed by the liver.

It localises to the secreted. Functionally, inhibits the enzymatic activity of phospholipase A2. The chain is Phospholipase A2 inhibitor 25 kDa subunit from Naja kaouthia (Monocled cobra).